Consider the following 289-residue polypeptide: 4-diphosphocytidyl-2-C-methyl-D-erythritol kinase (289 aa).

Residue Lys-10 is part of the active site. 94-104 (PVAAGLAGGSS) provides a ligand contact to ATP. Asp-136 is an active-site residue.

This sequence belongs to the GHMP kinase family. IspE subfamily.

It carries out the reaction 4-CDP-2-C-methyl-D-erythritol + ATP = 4-CDP-2-C-methyl-D-erythritol 2-phosphate + ADP + H(+). The protein operates within isoprenoid biosynthesis; isopentenyl diphosphate biosynthesis via DXP pathway; isopentenyl diphosphate from 1-deoxy-D-xylulose 5-phosphate: step 3/6. Its function is as follows. Catalyzes the phosphorylation of the position 2 hydroxy group of 4-diphosphocytidyl-2C-methyl-D-erythritol. This chain is 4-diphosphocytidyl-2-C-methyl-D-erythritol kinase, found in Bacillus mycoides (strain KBAB4) (Bacillus weihenstephanensis).